A 160-amino-acid chain; its full sequence is Transcription elongation factor GreA (160 aa).

Residues 50-70 (AAREQQSFNEGRIQELEAKLS) adopt a coiled-coil conformation.

It belongs to the GreA/GreB family.

In terms of biological role, necessary for efficient RNA polymerase transcription elongation past template-encoded arresting sites. The arresting sites in DNA have the property of trapping a certain fraction of elongating RNA polymerases that pass through, resulting in locked ternary complexes. Cleavage of the nascent transcript by cleavage factors such as GreA or GreB allows the resumption of elongation from the new 3'terminus. GreA releases sequences of 2 to 3 nucleotides. The chain is Transcription elongation factor GreA from Legionella pneumophila (strain Corby).